The sequence spans 182 residues: Putative manganese efflux pump MntP (182 aa).

6 helical membrane passes run 6-26 (LIPLIIMAFALGMDAFSVSLG), 37-57 (ILYIGVTIGIFHIIMPFIGMV), 71-91 (HFAGAILLIGLGFYIVYSSIL), 101-121 (IGISLFVFAFGVSIDSFSVGL), 131-151 (IITILLFGFVSMLLAWIGLFI), and 162-182 (YGEIVGGIILVGFGLYLLFPI).

This sequence belongs to the MntP (TC 9.B.29) family.

The protein localises to the cell membrane. Probably functions as a manganese efflux pump. In Bacillus cereus (strain ATCC 10987 / NRS 248), this protein is Putative manganese efflux pump MntP.